Reading from the N-terminus, the 415-residue chain is Gamma-glutamyl phosphate reductase (415 aa).

It belongs to the gamma-glutamyl phosphate reductase family.

Its subcellular location is the cytoplasm. The enzyme catalyses L-glutamate 5-semialdehyde + phosphate + NADP(+) = L-glutamyl 5-phosphate + NADPH + H(+). The protein operates within amino-acid biosynthesis; L-proline biosynthesis; L-glutamate 5-semialdehyde from L-glutamate: step 2/2. Functionally, catalyzes the NADPH-dependent reduction of L-glutamate 5-phosphate into L-glutamate 5-semialdehyde and phosphate. The product spontaneously undergoes cyclization to form 1-pyrroline-5-carboxylate. This is Gamma-glutamyl phosphate reductase from Oceanobacillus iheyensis (strain DSM 14371 / CIP 107618 / JCM 11309 / KCTC 3954 / HTE831).